The following is a 157-amino-acid chain: Small ribosomal subunit protein uS7 (157 aa).

The protein belongs to the universal ribosomal protein uS7 family. Part of the 30S ribosomal subunit. Contacts proteins S9 and S11.

In terms of biological role, one of the primary rRNA binding proteins, it binds directly to 16S rRNA where it nucleates assembly of the head domain of the 30S subunit. Is located at the subunit interface close to the decoding center, probably blocks exit of the E-site tRNA. The polypeptide is Small ribosomal subunit protein uS7 (Caulobacter sp. (strain K31)).